Consider the following 130-residue polypeptide: Small ribosomal subunit protein uS11c (130 aa).

Belongs to the universal ribosomal protein uS11 family. Part of the 30S ribosomal subunit.

The protein resides in the plastid. It is found in the chloroplast. This is Small ribosomal subunit protein uS11c from Angiopteris evecta (Mule's foot fern).